The primary structure comprises 378 residues: Protein arginine N-methyltransferase 6 (378 aa).

A disordered region spans residues 1–46 (MSLSKKRKLESGDSGGAGAGGEGAEEENGGEQEAAPPRPRRTKSER). Residues 13–22 (DSGGAGAGGE) show a composition bias toward gly residues. The residue at position 38 (R38) is an Asymmetric dimethylarginine; by autocatalysis. Positions 47–377 (DQLYYECYSD…EEKTKDFAME (331 aa)) constitute an SAM-dependent MTase PRMT-type domain. S-adenosyl-L-methionine-binding residues include H60, R69, G93, E115, and E144. Residues E158 and E167 contribute to the active site.

This sequence belongs to the class I-like SAM-binding methyltransferase superfamily. Protein arginine N-methyltransferase family. PRMT6 subfamily. In terms of assembly, interacts with (and methylates) HIV-1 Tat, Rev and Nucleocapsid protein p7 (NC). Interacts with EPB41L3 and NCOA1. Automethylation enhances its stability.

The protein localises to the nucleus. The catalysed reaction is L-arginyl-[protein] + 2 S-adenosyl-L-methionine = N(omega),N(omega)-dimethyl-L-arginyl-[protein] + 2 S-adenosyl-L-homocysteine + 2 H(+). In terms of biological role, arginine methyltransferase that can catalyze the formation of both omega-N monomethylarginine (MMA) and asymmetrical dimethylarginine (aDMA), with a strong preference for the formation of aDMA. Preferentially methylates arginyl residues present in a glycine and arginine-rich domain and displays preference for monomethylated substrates. Specifically mediates the asymmetric dimethylation of histone H3 'Arg-2' to form H3R2me2a. H3R2me2a represents a specific tag for epigenetic transcriptional repression and is mutually exclusive with methylation on histone H3 'Lys-4' (H3K4me2 and H3K4me3). Acts as a transcriptional repressor of various genes such as HOXA2, THBS1 and TP53. Repression of TP53 blocks cellular senescence. Also methylates histone H2A and H4 'Arg-3' (H2AR3me and H4R3me, respectively). Acts as a regulator of DNA base excision during DNA repair by mediating the methylation of DNA polymerase beta (POLB), leading to the stimulation of its polymerase activity by enhancing DNA binding and processivity. Methylates HMGA1. Regulates alternative splicing events. Acts as a transcriptional coactivator of a number of steroid hormone receptors including ESR1, ESR2, PGR and NR3C1. Promotes fasting-induced transcriptional activation of the gluconeogenic program through methylation of the CRTC2 transcription coactivator. Methylates GPS2, protecting GPS2 from ubiquitination and degradation. Methylates SIRT7, inhibiting SIRT7 histone deacetylase activity and promoting mitochondria biogenesis. The protein is Protein arginine N-methyltransferase 6 (Prmt6) of Mus musculus (Mouse).